The sequence spans 374 residues: F-box/LRR-repeat protein 8 (374 aa).

In terms of domain architecture, F-box spans 2–48; sequence GELVDNLPEEVLALIFRDLPLRDLAVATRVCRAWAAAAANSTVWSDK.

In terms of assembly, directly interacts with SKP1 and CUL1. Widely expressed during embryogenesis and in adult tissues.

Its function is as follows. Substrate-recognition component of the SCF (SKP1-CUL1-F-box protein)-type E3 ubiquitin ligase complex. The chain is F-box/LRR-repeat protein 8 (Fbxl8) from Mus musculus (Mouse).